A 277-amino-acid chain; its full sequence is UBX domain-containing protein 10 (277 aa).

A disordered region spans residues 1–102; the sequence is MAIEAPVNFA…APDEMPELLL (102 aa). Residues 16-31 are compositionally biased toward polar residues; the sequence is TVVSTAGDSSTWQPSS. Positions 35–50 are enriched in basic residues; sequence HVIRPKSAKGRKRPNL. Positions 60-77 are enriched in low complexity; the sequence is SPSALSSSPPPRSSGSPS. Residue serine 88 is modified to Phosphoserine. Positions 191-268 constitute a UBX domain; that stretch reads DEEPRLLLAV…GILHKSVLGI (78 aa).

Belongs to the UBXN10 family. As to quaternary structure, interacts with CLUAP1; the interaction is direct and mediates interaction with the intraflagellar transport complex B (IFT-B). Interacts with VCP; the interaction is direct.

The protein resides in the cell projection. The protein localises to the cilium. Functionally, VCP/p97-binding protein required for ciliogenesis. Acts as a tethering factor that facilitates recruitment of VCP/p97 to the intraflagellar transport complex B (IFT-B) in cilia. UBX domain-containing proteins act as tethering factors for VCP/p97 and may specify substrate specificity of VCP/p97. The chain is UBX domain-containing protein 10 from Mus musculus (Mouse).